A 72-amino-acid chain; its full sequence is Protein RALF-like 20 (72 aa).

The signal sequence occupies residues methionine 1–alanine 27. Disulfide bonds link cysteine 43–cysteine 51 and cysteine 63–cysteine 69.

Belongs to the plant rapid alkalinization factor (RALF) family.

The protein resides in the secreted. Its function is as follows. Cell signaling peptide that may regulate plant stress, growth, and development. Mediates a rapid alkalinization of extracellular space by mediating a transient increase in the cytoplasmic Ca(2+) concentration leading to a calcium-dependent signaling events through a cell surface receptor and a concomitant activation of some intracellular mitogen-activated protein kinases. In Arabidopsis thaliana (Mouse-ear cress), this protein is Protein RALF-like 20 (RALFL20).